Consider the following 199-residue polypeptide: MEKLGEDFFTKPTLMLAELLLGKIFVHNTGDGRCYRGKIVETEAYLAEGDEACHAYRGMTKRNRPMYGSPGTLYVYFSYGCHHLMNIVTEPAGVAGAVLIRAMEPIEGLEDMKRNRGLERTVDLLNGPGKLTRAMEITLSHNGASLSGDTVFIEKREDTAPHKICSSKRIGITKSTGLLWRRYVSDSFFVSGKKAGKAC.

Belongs to the DNA glycosylase MPG family.

This is Putative 3-methyladenine DNA glycosylase from Chlorobium phaeobacteroides (strain BS1).